The sequence spans 248 residues: PF03932 family protein CutC (248 aa).

This sequence belongs to the CutC family.

The protein localises to the cytoplasm. This is PF03932 family protein CutC from Porphyromonas gingivalis (strain ATCC 33277 / DSM 20709 / CIP 103683 / JCM 12257 / NCTC 11834 / 2561).